A 288-amino-acid polypeptide reads, in one-letter code: 4-diphosphocytidyl-2-C-methyl-D-erythritol kinase (288 aa).

Lys11 is an active-site residue. 100-110 (PTSAGLGSGSS) contacts ATP. Asp140 is an active-site residue.

Belongs to the GHMP kinase family. IspE subfamily.

The enzyme catalyses 4-CDP-2-C-methyl-D-erythritol + ATP = 4-CDP-2-C-methyl-D-erythritol 2-phosphate + ADP + H(+). The protein operates within isoprenoid biosynthesis; isopentenyl diphosphate biosynthesis via DXP pathway; isopentenyl diphosphate from 1-deoxy-D-xylulose 5-phosphate: step 3/6. Catalyzes the phosphorylation of the position 2 hydroxy group of 4-diphosphocytidyl-2C-methyl-D-erythritol. The sequence is that of 4-diphosphocytidyl-2-C-methyl-D-erythritol kinase from Wolbachia sp. subsp. Brugia malayi (strain TRS).